Here is a 184-residue protein sequence, read N- to C-terminus: Probable RNA 2'-phosphotransferase (184 aa).

Belongs to the KptA/TPT1 family.

In terms of biological role, removes the 2'-phosphate from RNA via an intermediate in which the phosphate is ADP-ribosylated by NAD followed by a presumed transesterification to release the RNA and generate ADP-ribose 1''-2''-cyclic phosphate (APPR&gt;P). May function as an ADP-ribosylase. The chain is Probable RNA 2'-phosphotransferase from Rhodopirellula baltica (strain DSM 10527 / NCIMB 13988 / SH1).